A 450-amino-acid polypeptide reads, in one-letter code: MFS-type transporter avaK (450 aa).

A run of 8 helical transmembrane segments spans residues valine 18–proline 38, arginine 100–leucine 120, alanine 148–alanine 168, alanine 171–valine 191, alanine 244–leucine 264, leucine 280–alanine 300, phenylalanine 329–phenylalanine 349, and glycine 408–valine 428.

This sequence belongs to the major facilitator superfamily.

It localises to the membrane. The protein operates within secondary metabolite biosynthesis. MFS-type transporter; part of the cluster that mediates the biosynthesis of a highly modified cyclo-arginine-tryptophan dipeptide (cRW). The sequence is that of MFS-type transporter avaK from Aspergillus versicolor.